The primary structure comprises 1286 residues: DNA-directed RNA polymerase 147 kDa polypeptide (1286 aa).

The protein belongs to the poxviridae DNA-directed RNA polymerase 147 kDa subunit family. In terms of assembly, the DNA-dependent RNA polymerase used for intermediate and late genes expression consists of eight subunits Rpo30/OPG66, Rpo7/OPG90, Rpo22/OPG103, Rpo147/OPG105, Rpo18/OPG119, Rpo19/OPG131, Rpo132/OPG151 and Rpo35/OPG156. The same holoenzyme, with the addition of the transcription-specificity factor OPG109, is used for early gene expression.

It localises to the virion. It carries out the reaction RNA(n) + a ribonucleoside 5'-triphosphate = RNA(n+1) + diphosphate. Functionally, part of the DNA-dependent RNA polymerase which catalyzes the transcription of viral DNA into RNA using the four ribonucleoside triphosphates as substrates. Responsible for the transcription of early, intermediate and late genes. DNA-dependent RNA polymerase associates with the early transcription factor (ETF), itself composed of OPG118 and OPG133, thereby allowing the early genes transcription. Late transcription, and probably also intermediate transcription, require newly synthesized RNA polymerase. This chain is DNA-directed RNA polymerase 147 kDa polypeptide (OPG105), found in Monkeypox virus.